A 423-amino-acid polypeptide reads, in one-letter code: Imidazolonepropionase (423 aa).

Positions 78 and 80 each coordinate Fe(3+). Residues His-78 and His-80 each contribute to the Zn(2+) site. Arg-87, Tyr-150, and His-183 together coordinate 4-imidazolone-5-propanoate. Residue Tyr-150 participates in N-formimidoyl-L-glutamate binding. His-247 is a Fe(3+) binding site. His-247 is a Zn(2+) binding site. Glu-250 provides a ligand contact to 4-imidazolone-5-propanoate. A Fe(3+)-binding site is contributed by Asp-322. Residue Asp-322 coordinates Zn(2+). N-formimidoyl-L-glutamate-binding residues include Asn-324 and Gly-326. A 4-imidazolone-5-propanoate-binding site is contributed by Ser-327.

It belongs to the metallo-dependent hydrolases superfamily. HutI family. Zn(2+) is required as a cofactor. It depends on Fe(3+) as a cofactor.

It localises to the cytoplasm. The catalysed reaction is 4-imidazolone-5-propanoate + H2O = N-formimidoyl-L-glutamate. Its pathway is amino-acid degradation; L-histidine degradation into L-glutamate; N-formimidoyl-L-glutamate from L-histidine: step 3/3. In terms of biological role, catalyzes the hydrolytic cleavage of the carbon-nitrogen bond in imidazolone-5-propanoate to yield N-formimidoyl-L-glutamate. It is the third step in the universal histidine degradation pathway. The protein is Imidazolonepropionase of Bacillus cytotoxicus (strain DSM 22905 / CIP 110041 / 391-98 / NVH 391-98).